Here is a 354-residue protein sequence, read N- to C-terminus: Thiamine thiazole synthase 2, chloroplastic (354 aa).

The transit peptide at 1–44 directs the protein to the chloroplast; that stretch reads MATTAASSLLKSSFAGSRLPSATRTTTPSSVAVATPRAGGGPIR. Residues 17–49 are disordered; the sequence is SRLPSATRTTTPSSVAVATPRAGGGPIRASISS. The segment covering 20-32 has biased composition (polar residues); sequence PSATRTTTPSSVA. Substrate contacts are provided by residues Ala-97, 117–118, Gly-125, and Val-190; that span reads EQ. Cys-219 carries the 2,3-didehydroalanine (Cys) modification. Substrate is bound by residues Asp-221, His-236, Met-288, and 298–300; that span reads RMG.

This sequence belongs to the THI4 family. In terms of assembly, homooctamer. Requires Fe cation as cofactor. During the catalytic reaction, a sulfide is transferred from Cys-219 to a reaction intermediate, generating a dehydroalanine residue. As to expression, highest expression in developing embryos and green leaves and a very low level expression seen in endosperm, roots, etiolated shoots and immature ears.

It localises to the plastid. The protein resides in the chloroplast. It catalyses the reaction [ADP-thiazole synthase]-L-cysteine + glycine + NAD(+) = [ADP-thiazole synthase]-dehydroalanine + ADP-5-ethyl-4-methylthiazole-2-carboxylate + nicotinamide + 3 H2O + 2 H(+). In terms of biological role, involved in biosynthesis of the thiamine precursor thiazole. Catalyzes the conversion of NAD and glycine to adenosine diphosphate 5-(2-hydroxyethyl)-4-methylthiazole-2-carboxylic acid (ADT), an adenylated thiazole intermediate. The reaction includes an iron-dependent sulfide transfer from a conserved cysteine residue of the protein to a thiazole intermediate. The enzyme can only undergo a single turnover, which suggests it is a suicide enzyme. May have additional roles in adaptation to various stress conditions and in DNA damage tolerance. This is Thiamine thiazole synthase 2, chloroplastic from Zea mays (Maize).